The following is a 513-amino-acid chain: Acetylcholine receptor subunit delta (513 aa).

A signal peptide spans 1–18 (MAVLLALFGALVLSGGLC). The Extracellular segment spans residues 19–244 (VNQEERLIHH…ITFYLIIKRK (226 aa)). Asparagine 88 and asparagine 161 each carry an N-linked (GlcNAc...) asparagine glycan. A disulfide bridge links cysteine 148 with cysteine 162. 3 helical membrane-spanning segments follow: residues 245 to 269 (PLFYVINIVTPCVLIAFMAILVFYL), 277 to 295 (MTLVISVLLAQSVFLLLVS), and 311 to 332 (YLLFIMLLVTAVVVICVVVLNF). Residues 333 to 467 (HFRTPSTHVM…WNRVARTLDR (135 aa)) are Cytoplasmic-facing. Phosphotyrosine; by Tyr-kinases is present on tyrosine 388. A helical membrane pass occupies residues 468–490 (LCLFLITPMLVVGTLWIFLMGIY).

It belongs to the ligand-gated ion channel (TC 1.A.9) family. Acetylcholine receptor (TC 1.A.9.1) subfamily. Pentamer of two alpha chains, and one each of the beta, delta, and gamma chains.

It localises to the postsynaptic cell membrane. Its subcellular location is the cell membrane. The enzyme catalyses K(+)(in) = K(+)(out). It catalyses the reaction Na(+)(in) = Na(+)(out). After binding acetylcholine, the AChR responds by an extensive change in conformation that affects all subunits and leads to opening of an ion-conducting channel across the plasma membrane. The protein is Acetylcholine receptor subunit delta (CHRND) of Gallus gallus (Chicken).